The primary structure comprises 479 residues: Nucleoside-diphosphatase uda-1 (479 aa).

Residues 1-7 (MLFPAFS) lie on the Cytoplasmic side of the membrane. Residues 8–24 (ILLISFFSLLSVVTTKT) traverse the membrane as a helical; Signal-anchor for type II membrane protein segment. Residues 25-479 (QYWCHGDGVL…VLSYFNIISV (455 aa)) are Lumenal-facing. Catalysis depends on Glu171, which acts as the Proton acceptor. N-linked (GlcNAc...) asparagine glycosylation is found at Asn300 and Asn452.

This sequence belongs to the GDA1/CD39 NTPase family. Ca(2+) is required as a cofactor. Mg(2+) serves as cofactor. The cofactor is Mn(2+).

The protein resides in the endomembrane system. It catalyses the reaction a ribonucleoside 5'-diphosphate + H2O = a ribonucleoside 5'-phosphate + phosphate + H(+). Its function is as follows. Hydrolyzes UDP and GDP but not any other nucleoside di-, mono- or triphosphates. May promote reglycosylation reactions involved in glycoproteins folding and quality control in the endoplasmic reticulum. The polypeptide is Nucleoside-diphosphatase uda-1 (uda-1) (Caenorhabditis elegans).